The sequence spans 238 residues: Heme oxygenase 1 (238 aa).

Belongs to the heme oxygenase family.

It catalyses the reaction heme b + 3 reduced [NADPH--hemoprotein reductase] + 3 O2 = biliverdin IXalpha + CO + Fe(2+) + 3 oxidized [NADPH--hemoprotein reductase] + 3 H2O + H(+). Its function is as follows. Catalyzes the opening of the heme ring with the release of iron. Key enzyme in the synthesis of the chromophoric part of the photosynthetic antennae. Upon overexpression in E.coli with PCB:ferredoxin oxidoreductase, CpeS and either CpcB or PecB permits synthesis of phycocyanin-coupled CpcB or PecB. In Nostoc sp. (strain PCC 7120 / SAG 25.82 / UTEX 2576), this protein is Heme oxygenase 1 (pbsA1).